The sequence spans 224 residues: 7-cyano-7-deazaguanine synthase (224 aa).

8–18 lines the ATP pocket; sequence LSGGMDSAAVI. The Zn(2+) site is built by cysteine 186, cysteine 196, cysteine 199, and cysteine 202.

The protein belongs to the QueC family. Requires Zn(2+) as cofactor.

The catalysed reaction is 7-carboxy-7-deazaguanine + NH4(+) + ATP = 7-cyano-7-deazaguanine + ADP + phosphate + H2O + H(+). The protein operates within purine metabolism; 7-cyano-7-deazaguanine biosynthesis. Catalyzes the ATP-dependent conversion of 7-carboxy-7-deazaguanine (CDG) to 7-cyano-7-deazaguanine (preQ(0)). The protein is 7-cyano-7-deazaguanine synthase of Xanthomonas oryzae pv. oryzae (strain MAFF 311018).